A 591-amino-acid chain; its full sequence is Maintenance of mitochondrial morphology protein 1 (591 aa).

Topologically, residues 1–83 are lumenal; the sequence is MGFNIPWNGT…AQPSLSFTQG (83 aa). A helical membrane pass occupies residues 84 to 104; sequence LLVGQLSVVLLIGAFIKFFIF. At 105–591 the chain is on the cytoplasmic side; it reads GEAPPPPSRS…GSMPDSVAVT (487 aa). Disordered regions lie at residues 138–159, 170–189, 334–398, and 479–591; these read PRTL…SSST, YSAT…VHHS, PGTS…KHAH, and EAEA…VAVT. Composition is skewed to polar residues over residues 146-159 and 170-179; these read STSN…SSST and YSATPTNPTS. The span at 180–189 shows a compositional bias: basic residues; the sequence is KHGRSRVHHS. The region spanning 192–462 is the SMP-LTD domain; sequence QPESLDWFNV…EPRVQVVGLP (271 aa). The span at 336–371 shows a compositional bias: polar residues; that stretch reads TSDQTMGPSASPPNQSTSTETASINDQTSEGQSTQR. A compositionally biased stretch (low complexity) spans 379 to 389; sequence PTNSTPTAATA. Composition is skewed to gly residues over residues 496-525 and 536-550; these read TAGG…GMGY and GDGG…GAGG. Residues 563–578 are compositionally biased toward basic and acidic residues; the sequence is GGDDGEGPGRRSDERF.

It belongs to the MMM1 family. Homodimer. Component of the ER-mitochondria encounter structure (ERMES) or MDM complex, composed of MMM1, MDM10, MDM12 and MDM34. An MMM1 homodimer associates with one molecule of MDM12 on each side in a pairwise head-to-tail manner, and the SMP-LTD domains of MMM1 and MDM12 generate a continuous hydrophobic tunnel for phospholipid trafficking.

The protein localises to the endoplasmic reticulum membrane. Component of the ERMES/MDM complex, which serves as a molecular tether to connect the endoplasmic reticulum (ER) and mitochondria. Components of this complex are involved in the control of mitochondrial shape and protein biogenesis, and function in nonvesicular lipid trafficking between the ER and mitochondria. The MDM12-MMM1 subcomplex functions in the major beta-barrel assembly pathway that is responsible for biogenesis of all outer membrane beta-barrel proteins, and acts in a late step after the SAM complex. The MDM10-MDM12-MMM1 subcomplex further acts in the TOM40-specific pathway after the action of the MDM12-MMM1 complex. Essential for establishing and maintaining the structure of mitochondria and maintenance of mtDNA nucleoids. In Ajellomyces capsulatus (strain G186AR / H82 / ATCC MYA-2454 / RMSCC 2432) (Darling's disease fungus), this protein is Maintenance of mitochondrial morphology protein 1.